The sequence spans 190 residues: MARHVFLTGPPGVGKTTLIHKASEVLKSSGVPVDGFYTEEVRQGGRRIGFDVVTLSGTRGPLSRVGLEPPPGKRECRVGQYVVDLTSFEQLALPVLRNADCSSGPGQRVCVIDEIGKMELFSQLFIQAVRQTLSTPGTIILGTIPVPKGKPLALVEEIRNRKDVKVFNVTKENRNHLLPDIVTCVQSSRK.

A2 carries the post-translational modification N-acetylalanine. Residues 9 to 16 (GPPGVGKT) and 109 to 116 (VCVIDEIG) each bind ATP. N6-acetyllysine is present on K165.

This sequence belongs to the THEP1 NTPase family. In terms of assembly, monomer.

The enzyme catalyses a ribonucleoside 5'-triphosphate + H2O = a ribonucleoside 5'-diphosphate + phosphate + H(+). It catalyses the reaction 5-methyl-UTP + H2O = 5-methyl-UDP + phosphate + H(+). The catalysed reaction is CTP + H2O = CDP + phosphate + H(+). It carries out the reaction ATP + H2O = ADP + phosphate + H(+). The enzyme catalyses GTP + H2O = GDP + phosphate + H(+). Has nucleotide phosphatase activity towards ATP, GTP, CTP, TTP and UTP. Hydrolyzes nucleoside diphosphates with lower efficiency. This chain is Cancer-related nucleoside-triphosphatase, found in Homo sapiens (Human).